Reading from the N-terminus, the 285-residue chain is Phosphatidylserine decarboxylase proenzyme (285 aa).

Catalysis depends on charge relay system; for autoendoproteolytic cleavage activity residues D89, H146, and S252. The active-site Schiff-base intermediate with substrate; via pyruvic acid; for decarboxylase activity is the S252. Position 252 is a pyruvic acid (Ser); by autocatalysis (S252).

It belongs to the phosphatidylserine decarboxylase family. PSD-B subfamily. Prokaryotic type I sub-subfamily. Heterodimer of a large membrane-associated beta subunit and a small pyruvoyl-containing alpha subunit. Requires pyruvate as cofactor. Post-translationally, is synthesized initially as an inactive proenzyme. Formation of the active enzyme involves a self-maturation process in which the active site pyruvoyl group is generated from an internal serine residue via an autocatalytic post-translational modification. Two non-identical subunits are generated from the proenzyme in this reaction, and the pyruvate is formed at the N-terminus of the alpha chain, which is derived from the carboxyl end of the proenzyme. The autoendoproteolytic cleavage occurs by a canonical serine protease mechanism, in which the side chain hydroxyl group of the serine supplies its oxygen atom to form the C-terminus of the beta chain, while the remainder of the serine residue undergoes an oxidative deamination to produce ammonia and the pyruvoyl prosthetic group on the alpha chain. During this reaction, the Ser that is part of the protease active site of the proenzyme becomes the pyruvoyl prosthetic group, which constitutes an essential element of the active site of the mature decarboxylase.

The protein resides in the cell membrane. It catalyses the reaction a 1,2-diacyl-sn-glycero-3-phospho-L-serine + H(+) = a 1,2-diacyl-sn-glycero-3-phosphoethanolamine + CO2. It participates in phospholipid metabolism; phosphatidylethanolamine biosynthesis; phosphatidylethanolamine from CDP-diacylglycerol: step 2/2. Catalyzes the formation of phosphatidylethanolamine (PtdEtn) from phosphatidylserine (PtdSer). This Vibrio cholerae serotype O1 (strain ATCC 39541 / Classical Ogawa 395 / O395) protein is Phosphatidylserine decarboxylase proenzyme.